Here is a 666-residue protein sequence, read N- to C-terminus: uncharacterized protein (666 aa).

This sequence belongs to the MG032/MG096/MG288 family.

This is an uncharacterized protein from Mycoplasma genitalium (strain ATCC 33530 / DSM 19775 / NCTC 10195 / G37) (Mycoplasmoides genitalium).